We begin with the raw amino-acid sequence, 207 residues long: Casparian strip membrane protein 3 (207 aa).

The Cytoplasmic segment spans residues 1-45; it reads MDSTKSTEETAINIPRESSSTKHKIAVAAVKAVATPHKRGGMKRG. The chain crosses the membrane as a helical span at residues 46–66; that stretch reads VAIFDFILRICALAAALAATA. Over 67 to 95 the chain is Extracellular; the sequence is TMGTTDQTLPFFTQFFQFQASYDDLPTFT. The chain crosses the membrane as a helical span at residues 96–116; sequence FFVIANAIASGYLVLSLPFSI. The Cytoplasmic segment spans residues 117–128; sequence VAIVRPHVTGVK. A helical membrane pass occupies residues 129–149; sequence LLLLILDTVLVAFTTAAAASA. Residues 150–181 are Extracellular-facing; that stretch reads AAIVYLAHNGNSNTNWFAICQQFNDFCQRTSG. Residues 182–202 form a helical membrane-spanning segment; the sequence is AVVASFIAAAIFIFLVVLSAV. At 203-207 the chain is on the cytoplasmic side; sequence ALRRH.

Belongs to the Casparian strip membrane proteins (CASP) family. Homodimer and heterodimers.

It localises to the cell membrane. Functionally, regulates membrane-cell wall junctions and localized cell wall deposition. Required for establishment of the Casparian strip membrane domain (CSD) and the subsequent formation of Casparian strips, a cell wall modification of the root endodermis that determines an apoplastic barrier between the intraorganismal apoplasm and the extraorganismal apoplasm and prevents lateral diffusion. This chain is Casparian strip membrane protein 3, found in Erythranthe guttata (Yellow monkey flower).